Reading from the N-terminus, the 86-residue chain is MGMKSPNIAAFMLPLLLILFTLSSQLKVVESTGRKLAWGFSGTPIVYTPPSRSCGTSPAVFTSKWRRPRPCRLPPGSYIPASDQSP.

A signal peptide spans Met-1–Ser-31. The SCOOP motif motif lies at Ile-45–Pro-58. Positions Ser-51 to Ser-53 match the SxS motif essential for MIK2 binding motif.

It belongs to the serine rich endogenous peptide (SCOOP) phytocytokine family. Interacts with MIK2 (via extracellular leucine-rich repeat domain); this interaction triggers the formation of complex between MIK2 and the BAK1/SERK3 and SERK4 coreceptors, and subsequent BAK1 activation by phosphorylation. As to expression, mostly expressed in leaves, and, to a lower extent, in roots, stems, siliques, seeds and flowers.

Its subcellular location is the cell membrane. The protein localises to the secreted. It is found in the extracellular space. The protein resides in the apoplast. Brassicaceae-specific phytocytokine (plant endogenous peptide released into the apoplast) perceived by MIK2 in a BAK1/SERK3 and SERK4 coreceptors-dependent manner, that modulates various physiological and antimicrobial processes including growth prevention and reactive oxygen species (ROS) response regulation. Prevents general growth and development. The polypeptide is Secreted transmembrane peptide 6 (Arabidopsis thaliana (Mouse-ear cress)).